Consider the following 506-residue polypeptide: Maturase K (506 aa).

It belongs to the intron maturase 2 family. MatK subfamily.

Its subcellular location is the plastid. The protein resides in the chloroplast. Usually encoded in the trnK tRNA gene intron. Probably assists in splicing its own and other chloroplast group II introns. This Rhododendron hippophaeoides (Rhododendron) protein is Maturase K.